A 576-amino-acid polypeptide reads, in one-letter code: TRAF-type zinc finger domain-containing protein 1 (576 aa).

Ala-2 bears the N-acetylalanine mark. A TRAF-type zinc finger spans residues 27-103 (IHEIHCQRNI…DLELSVVKLK (77 aa)). Phosphoserine occurs at positions 278, 320, 326, 327, 409, 415, 430, and 450. Residues 402–432 (EGIPTQDSQPEDRSPELSRRRVKHQGDLSSG) form a disordered region. The span at 411–420 (PEDRSPELSR) shows a compositional bias: basic and acidic residues. Disordered regions lie at residues 465–491 (LNSS…GSQD) and 529–576 (HGSP…EEEE). Phosphoserine is present on Ser-531. A compositionally biased stretch (polar residues) spans 540 to 552 (GSRSSRVTPTAAS).

Interacts with MAVS, TICAM1, TRAF1, TRAF2, TRAF3 and TRAF6. As to expression, expressed in vascular smooth muscle cells.

Its function is as follows. Negative feedback regulator that controls excessive innate immune responses. Regulates both Toll-like receptor 4 (TLR4) and DDX58/RIG1-like helicases (RLH) pathways. May inhibit the LTR pathway by direct interaction with TRAF6 and attenuation of NF-kappa-B activation. May negatively regulate the RLH pathway downstream from MAVS and upstream of NF-kappa-B and IRF3. This Rattus norvegicus (Rat) protein is TRAF-type zinc finger domain-containing protein 1 (Trafd1).